The sequence spans 438 residues: L-fucose-proton symporter (438 aa).

Residues G2 to I26 lie on the Cytoplasmic side of the membrane. Residues P27–Q53 form a helical membrane-spanning segment. At Q54–F61 the chain is on the periplasmic side. The chain crosses the membrane as a helical span at residues Q62–K87. Over L88 to Y90 the chain is Cytoplasmic. Residues K91–E113 traverse the membrane as a helical segment. The Periplasmic portion of the chain corresponds to I114 to Y117. A helical membrane pass occupies residues T118–V144. At L145–S150 the chain is on the cytoplasmic side. Residues G151 to L178 form a helical membrane-spanning segment. The Periplasmic portion of the chain corresponds to S179–S193. Residues P194 to M227 form a helical membrane-spanning segment. The Cytoplasmic portion of the chain corresponds to L228–I257. A helical transmembrane segment spans residues R258–E287. Residues E288–T293 lie on the Periplasmic side of the membrane. Residues A294 to I319 traverse the membrane as a helical segment. At S320–P324 the chain is on the cytoplasmic side. A helical membrane pass occupies residues H325–A343. Topologically, residues F344–G347 are periplasmic. A helical transmembrane segment spans residues H348 to G372. At I373 to D379 the chain is on the cytoplasmic side. Residues T380–A407 traverse the membrane as a helical segment. Over A408 to N410 the chain is Periplasmic. Residues I411–R430 form a helical membrane-spanning segment. Residues F431–N438 are Cytoplasmic-facing.

The protein belongs to the major facilitator superfamily. FHS transporter (TC 2.A.1.7) family.

Its subcellular location is the cell inner membrane. It carries out the reaction L-fucose(in) + H(+)(in) = L-fucose(out) + H(+)(out). The catalysed reaction is D-arabinose(out) + H(+)(out) = D-arabinose(in) + H(+)(in). It catalyses the reaction L-galactose(out) + H(+)(out) = L-galactose(in) + H(+)(in). Functionally, mediates the uptake of L-fucose across the boundary membrane with the concomitant transport of protons into the cell (symport system). Can also transport L-galactose and D-arabinose, but at reduced rates compared with L-fucose. Is not able to transport L-rhamnose and L-arabinose. Binds D-arabinose with the highest affinity, followed by L-fucose, and then by L-galactose. The sequence is that of L-fucose-proton symporter (fucP) from Escherichia coli (strain K12).